The primary structure comprises 522 residues: Coiled-coil domain-containing protein 149-B (522 aa).

Coiled coils occupy residues 1-196 (MANQ…LESK) and 260-287 (IRHQ…LEVS). Positions 413-522 (ACTAERSEQH…TSPHQECPSS (110 aa)) are disordered. Composition is skewed to polar residues over residues 429–438 (GGHQSMSTEA), 467–490 (QPVT…TAEQ), and 503–522 (ASLN…CPSS).

The protein belongs to the CCDC149 family.

The polypeptide is Coiled-coil domain-containing protein 149-B (ccdc149b) (Danio rerio (Zebrafish)).